A 255-amino-acid polypeptide reads, in one-letter code: 4-hydroxy-tetrahydrodipicolinate reductase (255 aa).

NAD(+)-binding positions include 8–13 (GANGRV), 88–90 (GTT), and 112–115 (ATNM). H144 acts as the Proton donor/acceptor in catalysis. A (S)-2,3,4,5-tetrahydrodipicolinate-binding site is contributed by H145. K148 (proton donor) is an active-site residue. Position 154–155 (154–155 (GT)) interacts with (S)-2,3,4,5-tetrahydrodipicolinate.

It belongs to the DapB family.

It is found in the cytoplasm. It catalyses the reaction (S)-2,3,4,5-tetrahydrodipicolinate + NAD(+) + H2O = (2S,4S)-4-hydroxy-2,3,4,5-tetrahydrodipicolinate + NADH + H(+). It carries out the reaction (S)-2,3,4,5-tetrahydrodipicolinate + NADP(+) + H2O = (2S,4S)-4-hydroxy-2,3,4,5-tetrahydrodipicolinate + NADPH + H(+). It participates in amino-acid biosynthesis; L-lysine biosynthesis via DAP pathway; (S)-tetrahydrodipicolinate from L-aspartate: step 4/4. Catalyzes the conversion of 4-hydroxy-tetrahydrodipicolinate (HTPA) to tetrahydrodipicolinate. This chain is 4-hydroxy-tetrahydrodipicolinate reductase, found in Sulfurimonas denitrificans (strain ATCC 33889 / DSM 1251) (Thiomicrospira denitrificans (strain ATCC 33889 / DSM 1251)).